Reading from the N-terminus, the 146-residue chain is Leghemoglobin Lb120-1 (146 aa).

Residues 2–146 (GFTEKQEALV…LASAIKKAMN (145 aa)) enclose the Globin domain. Nitrated tyrosine is present on residues tyrosine 24 and tyrosine 29. Serine 44 contributes to the heme b binding site. Serine 44 bears the Phosphoserine mark. Histidine 61 provides a ligand contact to O2. Positions 64, 93, and 96 each coordinate heme b. At tyrosine 134 the chain carries Nitrated tyrosine.

The protein belongs to the plant globin family. As to quaternary structure, monomer. Post-translationally, nitrated in effective nodules and particularly in hypoxic conditions; this mechanism may play a protective role in the symbiosis by buffering toxic peroxynitrite NO(2)(-). Nitration level decrease during nodule senescence. Phosphorylation at Ser-44 disrupts the molecular environment of its porphyrin ring oxygen binding pocket, thus leading to a reduced oxygen consumption and to the delivery of oxygen O(2) to symbiosomes. Root nodules.

The protein resides in the cytoplasm. Its subcellular location is the cytosol. The protein localises to the nucleus. In terms of biological role, leghemoglobin that reversibly binds oxygen O(2) through a pentacoordinated heme iron. In root nodules, facilitates the diffusion of oxygen to the bacteroids while preventing the bacterial nitrogenase from being inactivated by buffering dioxygen, nitric oxide and carbon monoxide, and promoting the formation of reactive oxygen species (ROS, e.g. H(2)O(2)). This role is essential for symbiotic nitrogen fixation (SNF). The polypeptide is Leghemoglobin Lb120-1 (Pisum sativum (Garden pea)).